The following is a 542-amino-acid chain: Ribonuclease Y (542 aa).

A helical membrane pass occupies residues Met1 to Ala21. The segment at Ser52–Ala92 is disordered. Residues Ala59 to Ala92 show a composition bias toward basic and acidic residues. The KH domain occupies Val229–Leu289. In terms of domain architecture, HD spans Val355 to Ala449.

It belongs to the RNase Y family.

It is found in the cell membrane. In terms of biological role, endoribonuclease that initiates mRNA decay. The polypeptide is Ribonuclease Y (Cutibacterium acnes (strain DSM 16379 / KPA171202) (Propionibacterium acnes)).